A 253-amino-acid polypeptide reads, in one-letter code: Sulfate transporter CysZ (253 aa).

4 helical membrane-spanning segments follow: residues 31-51, 75-95, 151-171, and 222-242; these read FVIL…WWLF, LLWP…FSTI, IVLL…PVLW, and IPVL…AMWV.

Belongs to the CysZ family.

The protein localises to the cell inner membrane. Functionally, high affinity, high specificity proton-dependent sulfate transporter, which mediates sulfate uptake. Provides the sulfur source for the cysteine synthesis pathway. This chain is Sulfate transporter CysZ, found in Citrobacter koseri (strain ATCC BAA-895 / CDC 4225-83 / SGSC4696).